A 440-amino-acid chain; its full sequence is Serine protease inhibitor A3G (440 aa).

The segment at 357 to 382 (GTEAAAATGMAGVGCCAVFDFLEIFF) is RCL.

This sequence belongs to the serpin family. Expressed in bone marrow (particularly hematopoietic stem cells), heart, kidney, liver, lung, skeletal muscle, spleen, testis, thymus and T-cells.

The protein localises to the cytoplasm. The protein resides in the nucleus. Functionally, serine and cysteine protease inhibitor. Can inhibit lysosomal papain-like proteases including the cathepsins B, G, H, K, L and V. Ineffective against elastase, granzyme A, granzyme B, or caspases 3, 8 or 9. Inhibition of cytoplasmic cathepsin B following release from the lysosome may protect cells from apoptosis. This may facilitate the survival of progenitor T-cells and the subsequent development of long term memory CD8 T-cells. The chain is Serine protease inhibitor A3G (Serpina3g) from Mus musculus (Mouse).